We begin with the raw amino-acid sequence, 313 residues long: Cyclin-dependent kinase B2-1 (313 aa).

M1 is modified (N-acetylmethionine). The region spanning 14–304 (FEKLEKVGEG…AKMAMEHPYF (291 aa)) is the Protein kinase domain. ATP is bound by residues 20–28 (VGEGTYGKV) and K43. A Phosphotyrosine modification is found at Y25. Residue D145 is the Proton acceptor of the active site. At T179 the chain carries Phosphothreonine.

The protein belongs to the protein kinase superfamily. CMGC Ser/Thr protein kinase family. CDC2/CDKX subfamily. Interacts with CYCD4-1 and CKS1. In terms of tissue distribution, expressed in root tips, shoot apical meristem, leaf primordia vascular tissues and tapetum of anthers.

The catalysed reaction is L-seryl-[protein] + ATP = O-phospho-L-seryl-[protein] + ADP + H(+). The enzyme catalyses L-threonyl-[protein] + ATP = O-phospho-L-threonyl-[protein] + ADP + H(+). It catalyses the reaction [DNA-directed RNA polymerase] + ATP = phospho-[DNA-directed RNA polymerase] + ADP + H(+). The sequence is that of Cyclin-dependent kinase B2-1 (CDKB2-1) from Arabidopsis thaliana (Mouse-ear cress).